A 547-amino-acid polypeptide reads, in one-letter code: MAAKDVKFDTDARDRMLRGVNILADAVKVTLGPKGRNVVIDKSFGAPRITKDGVSVAKEIELSDKFENMGAQMVKEVASRTNDEAGDGTTTATVLAQAIIKEGLKAVAAGMNPMDLKRGIDLATSKVVEAIKAAARPVNDSHEVAQVGTISANGEAQIGRFIADAMQKVGNEGVITVEENKGLETEVEVVEGMQFDRGYLSPYFVTNADKMTAELDDVYILLHEKKLSSLQPMVPLLEAVIQSQKPLLIIAEDVEGEALATLVVNKLRGGLKIAAVKAPGFGDRRKAMLQDIAILTGGQVISEDLGMKLENVTIDMLGRAKKISINKDNTTIVDGNGDKAEIDARVAQIRNQIEETSSDYDREKLQERVAKLAGGVAVIRVGGMTEVEVKERKDRVDDALNATRAAVQEGIVVGGGVALIQGGKALDGLTGENPDQNAGITIVRRALEAPLRQIAQNAGVDGSVVAGKVRESNEKSFGFNAQTEEYGDMFKFGVIDPAKVVRTALEDAASVASLLITTEAMIADKPEPKSPAGGPGMGGMGGMDGMM.

ATP-binding positions include 30–33 (TLGP), lysine 51, 87–91 (DGTTT), glycine 415, and aspartate 496. The interval 525-547 (KPEPKSPAGGPGMGGMGGMDGMM) is disordered. The segment covering 533–547 (GGPGMGGMGGMDGMM) has biased composition (gly residues).

It belongs to the chaperonin (HSP60) family. In terms of assembly, forms a cylinder of 14 subunits composed of two heptameric rings stacked back-to-back. Interacts with the co-chaperonin GroES.

It is found in the cytoplasm. The enzyme catalyses ATP + H2O + a folded polypeptide = ADP + phosphate + an unfolded polypeptide.. Together with its co-chaperonin GroES, plays an essential role in assisting protein folding. The GroEL-GroES system forms a nano-cage that allows encapsulation of the non-native substrate proteins and provides a physical environment optimized to promote and accelerate protein folding. This is Chaperonin GroEL 1 from Cereibacter sphaeroides (strain ATCC 17023 / DSM 158 / JCM 6121 / CCUG 31486 / LMG 2827 / NBRC 12203 / NCIMB 8253 / ATH 2.4.1.) (Rhodobacter sphaeroides).